Reading from the N-terminus, the 143-residue chain is Ponticulin (143 aa).

Residues 1 to 22 form the signal peptide; sequence MLVLRNLLALVTLALLFTLSSA. Asparagine 111 carries N-linked (GlcNAc...) asparagine glycosylation. The GPI-like-anchor amidated serine moiety is linked to residue serine 118. Positions 119 to 143 are cleaved as a propeptide — removed in mature form; sequence SSGSTVMIGLASSLLFAFATLLALF.

This sequence belongs to the ponticulin family. As to quaternary structure, monomer. Disulfide bond(s) stabilize the native, actin-binding conformation of ponticulin. In terms of processing, the GPI-like-anchor contains a phosphoceramide group, rather than a phosphatidyl group.

The protein localises to the cell membrane. Functionally, binds F-actin and nucleates actin assembly. Major high affinity link between the plasma membrane and the cortical actin network. This is Ponticulin (ponA) from Dictyostelium discoideum (Social amoeba).